Here is a 380-residue protein sequence, read N- to C-terminus: MAKKDYYEVLGLQKGASENDIKRAYKRLASKHHPDKNQGSKDAEEKFKEINEAYEVLGDAEKRAAYDQYGHAAFEQGGGAGGFGGGFGGGGFGGFEDIFSEMFGGGFGGGGRRNHVVRGDDLRYDIEISLEEAVKGCKKDIRISTLAECDTCHGSGAEKGSKVETCSHCHGSGRIRRQQGFFVTEAVCPSCHGSGKKIEKPCKSCHGDGRVQKAKNLSVTIPAGVDTGNQLRLSGEGAAGENGAPAGDLYVVIHVREHDIFERDGSNLYCEVPISFTMAALGGEIEVPTLDGKLKLKIPAETQTGKLFRVRGKGVASPRGGYAGDLICKVVVETPVALNDEQKDLLRKLEESLAGKSKHRPQQESFLDSVKNFFSNLGKH.

Residues 5–70 (DYYEVLGLQK…EKRAAYDQYG (66 aa)) enclose the J domain. A CR-type zinc finger spans residues 136 to 214 (GCKKDIRIST…CHGDGRVQKA (79 aa)). 8 residues coordinate Zn(2+): Cys-149, Cys-152, Cys-166, Cys-169, Cys-188, Cys-191, Cys-202, and Cys-205. 4 CXXCXGXG motif repeats span residues 149–156 (CDTCHGSG), 166–173 (CSHCHGSG), 188–195 (CPSCHGSG), and 202–209 (CKSCHGDG).

Belongs to the DnaJ family. In terms of assembly, homodimer. Zn(2+) serves as cofactor.

The protein localises to the cytoplasm. Participates actively in the response to hyperosmotic and heat shock by preventing the aggregation of stress-denatured proteins and by disaggregating proteins, also in an autonomous, DnaK-independent fashion. Unfolded proteins bind initially to DnaJ; upon interaction with the DnaJ-bound protein, DnaK hydrolyzes its bound ATP, resulting in the formation of a stable complex. GrpE releases ADP from DnaK; ATP binding to DnaK triggers the release of the substrate protein, thus completing the reaction cycle. Several rounds of ATP-dependent interactions between DnaJ, DnaK and GrpE are required for fully efficient folding. Also involved, together with DnaK and GrpE, in the DNA replication of plasmids through activation of initiation proteins. In Actinobacillus pleuropneumoniae serotype 5b (strain L20), this protein is Chaperone protein DnaJ.